We begin with the raw amino-acid sequence, 338 residues long: Starch-binding domain-containing protein 1 (338 aa).

Residues 1–6 lie on the Extracellular side of the membrane; that stretch reads MGAVWS. A helical membrane pass occupies residues 7–23; that stretch reads ALLVGGGLAGALILWLL. Residues 24–338 lie on the Cytoplasmic side of the membrane; sequence RGDSGAPGKD…KVVHGWWGIH (315 aa). Disordered regions lie at residues 30-73 and 120-148; these read PGKD…RELV and KIPDTHSRADSEAARNQSPGSHGGEWRLP. Over residues 36–52 the composition is skewed to low complexity; sequence AEPPQKGAPPGEAAAPG. Gly residues predominate over residues 53–62; sequence DGPGGGGSGG. Ser-68 carries the post-translational modification Phosphoserine. A compositionally biased stretch (basic and acidic residues) spans 122–132; it reads PDTHSRADSEA. Phosphoserine is present on residues Ser-140, Ser-167, and Ser-179. An LIR motif is present at residues 185–191; that stretch reads HEDWEVV. Phosphoserine occurs at positions 195, 196, 205, 209, 212, 220, and 223. One can recognise a CBM20 domain in the interval 238–337; sequence SLKPQQVSIQ…DKVVHGWWGI (100 aa).

As to quaternary structure, interacts with the ATG8 family proteins GABARAP and GABARAPL1. Interacts with several glycogen-associated proteins, such as GYS2 (liver glycogen synthase), GDE (glycogen debranching enzyme), GBE1 (glycogen branching enzyme 1) and EPM2A (Laforin). In terms of processing, ubiquitinated, which leads to proteasomal degradation. Expressed at high level in glycogen-accumulating organs such as muscle and liver. Trace signals are also found in brain, kidney, and pancreas.

It localises to the preautophagosomal structure membrane. It is found in the endoplasmic reticulum membrane. The protein localises to the cell membrane. Its subcellular location is the sarcolemma. The protein resides in the T-tubule. Acts as a cargo receptor for glycogen. Delivers its cargo to an autophagic pathway called glycophagy, resulting in the transport of glycogen to lysosomes. This Mus musculus (Mouse) protein is Starch-binding domain-containing protein 1.